Consider the following 56-residue polypeptide: Small ribosomal subunit protein uS14 (56 aa).

Cys-21, Cys-24, Cys-39, and Cys-42 together coordinate Zn(2+).

The protein belongs to the universal ribosomal protein uS14 family. Component of the 40S small ribosomal subunit. Zn(2+) serves as cofactor.

It is found in the cytoplasm. The protein resides in the cytosol. Its subcellular location is the rough endoplasmic reticulum. This Bombyx mori (Silk moth) protein is Small ribosomal subunit protein uS14 (RpS29).